A 205-amino-acid chain; its full sequence is ATP phosphoribosyltransferase (205 aa).

Belongs to the ATP phosphoribosyltransferase family. Short subfamily. Heteromultimer composed of HisG and HisZ subunits.

The protein localises to the cytoplasm. The enzyme catalyses 1-(5-phospho-beta-D-ribosyl)-ATP + diphosphate = 5-phospho-alpha-D-ribose 1-diphosphate + ATP. It participates in amino-acid biosynthesis; L-histidine biosynthesis; L-histidine from 5-phospho-alpha-D-ribose 1-diphosphate: step 1/9. In terms of biological role, catalyzes the condensation of ATP and 5-phosphoribose 1-diphosphate to form N'-(5'-phosphoribosyl)-ATP (PR-ATP). Has a crucial role in the pathway because the rate of histidine biosynthesis seems to be controlled primarily by regulation of HisG enzymatic activity. The chain is ATP phosphoribosyltransferase from Staphylococcus saprophyticus subsp. saprophyticus (strain ATCC 15305 / DSM 20229 / NCIMB 8711 / NCTC 7292 / S-41).